The chain runs to 158 residues: Developmental pluripotency-associated protein 3 (158 aa).

Disordered stretches follow at residues 1–38 (MDEP…EILQ) and 54–78 (SAKP…VENR). Residues 26–35 (DEGDSPDDSE) are compositionally biased toward acidic residues. The segment covering 58–68 (TKYHRRQRVRL) has biased composition (basic residues).

The protein resides in the nucleus. Its subcellular location is the cytoplasm. In terms of biological role, primordial germ cell (PGCs)-specific protein involved in epigenetic chromatin reprogramming in the zygote following fertilization. In zygotes, DNA demethylation occurs selectively in the paternal pronucleus before the first cell division, while the adjacent maternal pronucleus and certain paternally-imprinted loci are protected from this process. Participates in protection of DNA methylation in the maternal pronucleus by preventing conversion of 5mC to 5hmC: specifically recognizes and binds histone H3 dimethylated at 'Lys-9' (H3K9me2) on maternal genome, and protects maternal genome from TET3-mediated conversion to 5hmC and subsequent DNA demethylation. Does not bind paternal chromatin, which is mainly packed into protamine and does not contain much H3K9me2 mark. Also protects imprinted loci that are marked with H3K9me2 in mature sperm from DNA demethylation in early embryogenesis. May be important for the totipotent/pluripotent states continuing through preimplantation development. Also involved in chromatin condensation in oocytogenesis. The sequence is that of Developmental pluripotency-associated protein 3 (Dppa3) from Rattus norvegicus (Rat).